The chain runs to 367 residues: Phosphoribosylaminoimidazole-succinocarboxamide synthase (367 aa).

Belongs to the SAICAR synthetase family.

It catalyses the reaction 5-amino-1-(5-phospho-D-ribosyl)imidazole-4-carboxylate + L-aspartate + ATP = (2S)-2-[5-amino-1-(5-phospho-beta-D-ribosyl)imidazole-4-carboxamido]succinate + ADP + phosphate + 2 H(+). Its pathway is purine metabolism; IMP biosynthesis via de novo pathway; 5-amino-1-(5-phospho-D-ribosyl)imidazole-4-carboxamide from 5-amino-1-(5-phospho-D-ribosyl)imidazole-4-carboxylate: step 1/2. This chain is Phosphoribosylaminoimidazole-succinocarboxamide synthase, found in Shewanella baltica (strain OS185).